Consider the following 628-residue polypeptide: Putative serine esterase Mb1866c (628 aa).

Ser-156 acts as the Acyl-ester intermediate in catalysis. Residues Asp-322 and His-350 each act as charge relay system in the active site.

This sequence belongs to the CocE/NonD hydrolase family.

The polypeptide is Putative serine esterase Mb1866c (Mycobacterium bovis (strain ATCC BAA-935 / AF2122/97)).